The chain runs to 293 residues: Decaprenyl diphosphate synthase (293 aa).

The disordered stretch occupies residues 1–24 (MATTRGKKTYPQLPPAPDDYPTFP). Asp73 is a catalytic residue. Mg(2+) is bound at residue Asp73. Residues 74-77 (GNGR), Trp78, Arg86, His90, and 118-120 (STE) each bind substrate. Asn121 functions as the Proton acceptor in the catalytic mechanism. Residues Trp122, Arg124, Arg241, and 247-249 (RAS) each bind substrate. Residue Glu260 coordinates Mg(2+).

This sequence belongs to the UPP synthase family. Homodimer. It depends on Mg(2+) as a cofactor.

It is found in the cell membrane. The enzyme catalyses (2Z,6E)-farnesyl diphosphate + 7 isopentenyl diphosphate = (2Z,6Z,10Z,14Z,18Z,22Z,26Z,30Z,34E)-decaprenyl diphosphate + 7 diphosphate. It catalyses the reaction n isopentenyl diphosphate + (2E,6E)-farnesyl diphosphate = a di-trans,poly-cis-polyprenyl diphosphate + n diphosphate. Catalyzes the sequential condensation of isopentenyl diphosphate (IPP) in the cis configuration with (2Z,6E)-farnesyl diphosphate (Z-FPP or EZ-FPP) generating the 50 carbon product trans,polycis-decaprenyl diphosphate. When (2E,6E)-farnesyl diphosphate (E-FPP or EE-FPP) is used in vitro, both primary products decaprenyl diphosphate and heptaprenyl diphosphate are synthesized. It is probably due to the fact that M.smegmatis synthesizes both (2E,6E,10E)-geranylgeranyl diphosphate (EEE-GGPP) and (2E,6E,10Z)-geranylgeranyl diphosphate (EEZ-GGPP). Can also accept many different allylic substrates, including E-geranyl diphosphate (E-GPP), neryl diphosphate (NPP), and all-trans-geranyl-geranyl diphosphate. This Mycolicibacterium smegmatis (strain ATCC 700084 / mc(2)155) (Mycobacterium smegmatis) protein is Decaprenyl diphosphate synthase (uppS).